A 4299-amino-acid polypeptide reads, in one-letter code: DNA-dependent protein kinase catalytic subunit (4299 aa).

Residues 551–590 adopt a coiled-coil conformation; it reads KDLNSTIKKENNNNNNNKNKNNNNNQTLTKEEISKSIKKL. 4 disordered regions span residues 557-577, 613-633, 878-917, and 1206-1230; these read IKKE…NNQT, DEND…DQDN, NSSD…MKFK, and SSSK…EDGT. 4 stretches are compositionally biased toward low complexity: residues 562-575, 617-631, 878-893, and 1206-1226; these read NNNN…NNNN, NNSN…NNDQ, NSSD…IDSG, and SSSK…NNNS. Ser-2789 is modified (phosphoserine; by autocatalysis). 2 positions are modified to phosphothreonine; by autocatalysis: Thr-2814 and Thr-2822. Positions 2832 to 2867 are enriched in low complexity; it reads SSSQSYGGTNNNTGSSQLSSSSSSSGSQSSSQNNSS. Disordered regions lie at residues 2832–2881 and 3535–3559; these read SSSQ…PKLI and TTSS…SSSQ. In terms of domain architecture, FAT spans 3031–3707; it reads KIKDISLNSN…YFPFKISSEQ (677 aa). Residues 3887 to 4226 form the PI3K/PI4K catalytic domain; sequence FDTNVLVMGS…AKKKLELVNP (340 aa). A G-loop region spans residues 3893 to 3899; the sequence is VMGSLRK. The tract at residues 4092-4100 is catalytic loop; it reads GIGDRHLEN. The segment at 4112–4137 is activation loop; sequence GIDFGHAFGTATQFLPIPELMPFRLT. An FATC domain is found at 4267–4299; it reads VCSSVKEQIDCLIDQSTDPNILSRAWVGWNGAL.

The protein belongs to the PI3/PI4-kinase family. DNAPK subfamily. In terms of processing, may be phosphorylated upon DNA damage. Could be autophosphorylated. Autophosphorylation induces a conformational change that leads to remodeling of the DNA-PK complex, requisite for efficient end processing and DNA repair. Post-translationally, autophosphorylated on Ser-2789, Thr-2814 and Thr-2822. Ser-2789 is a DNA damage-inducible phosphorylation site (inducible with ionizing radiation, IR).

It is found in the nucleus. The protein resides in the nucleolus. It catalyses the reaction L-seryl-[protein] + ATP = O-phospho-L-seryl-[protein] + ADP + H(+). The catalysed reaction is L-threonyl-[protein] + ATP = O-phospho-L-threonyl-[protein] + ADP + H(+). With respect to regulation, inhibited by wortmannin. Activity of the enzyme seems to be attenuated by autophosphorylation. Its function is as follows. Serine/threonine-protein kinase that acts as a molecular sensor for DNA damage. Is recruited to DNA ends by the Ku70/Ku80 heterodimer and is involved in DNA non-homologous end joining (NHEJ) required for double-strand break (DSB) repair and V(D)J recombination. This activity is only apparent when DNA damage is administered in G1 phase of the cell cycle. Required for efficient signaling of DNA double-stranded breaks via phosphorylation of H2AX during G1. The protein is DNA-dependent protein kinase catalytic subunit (dnapkcs) of Dictyostelium discoideum (Social amoeba).